Consider the following 513-residue polypeptide: Histidine ammonia-lyase (513 aa).

Positions 143–145 form a cross-link, 5-imidazolinone (Ala-Gly); that stretch reads ASG. At S144 the chain carries 2,3-didehydroalanine (Ser).

Belongs to the PAL/histidase family. Contains an active site 4-methylidene-imidazol-5-one (MIO), which is formed autocatalytically by cyclization and dehydration of residues Ala-Ser-Gly.

The protein localises to the cytoplasm. It catalyses the reaction L-histidine = trans-urocanate + NH4(+). The protein operates within amino-acid degradation; L-histidine degradation into L-glutamate; N-formimidoyl-L-glutamate from L-histidine: step 1/3. This is Histidine ammonia-lyase from Xanthomonas axonopodis pv. citri (strain 306).